A 547-amino-acid polypeptide reads, in one-letter code: (R)-citramalate synthase (547 aa).

The 271-residue stretch at Leu8–Ala278 folds into the Pyruvate carboxyltransferase domain.

It belongs to the alpha-IPM synthase/homocitrate synthase family.

It carries out the reaction pyruvate + acetyl-CoA + H2O = (3R)-citramalate + CoA + H(+). The protein operates within amino-acid biosynthesis; L-isoleucine biosynthesis; 2-oxobutanoate from pyruvate: step 1/3. In terms of biological role, catalyzes the condensation of pyruvate and acetyl-coenzyme A to form (R)-citramalate. The chain is (R)-citramalate synthase from Synechocystis sp. (strain ATCC 27184 / PCC 6803 / Kazusa).